Reading from the N-terminus, the 616-residue chain is UvrABC system protein C (616 aa).

Residues 11–85 (ASPGVYIFRR…IKQHRPHYNV (75 aa)) form the GIY-YIG domain. One can recognise a UVR domain in the interval 194–229 (APVIARLKADMQAAARAQDFEQAARLRDRVQAVEKL).

The protein belongs to the UvrC family. In terms of assembly, interacts with UvrB in an incision complex.

The protein localises to the cytoplasm. Its function is as follows. The UvrABC repair system catalyzes the recognition and processing of DNA lesions. UvrC both incises the 5' and 3' sides of the lesion. The N-terminal half is responsible for the 3' incision and the C-terminal half is responsible for the 5' incision. This Deinococcus geothermalis (strain DSM 11300 / CIP 105573 / AG-3a) protein is UvrABC system protein C.